A 237-amino-acid polypeptide reads, in one-letter code: tRNA (guanine-N(7)-)-methyltransferase (237 aa).

Positions 56, 81, 108, and 131 each coordinate S-adenosyl-L-methionine. D131 is a catalytic residue. Residues K135, D167, and 204–207 (TKFE) each bind substrate.

This sequence belongs to the class I-like SAM-binding methyltransferase superfamily. TrmB family.

It catalyses the reaction guanosine(46) in tRNA + S-adenosyl-L-methionine = N(7)-methylguanosine(46) in tRNA + S-adenosyl-L-homocysteine. Its pathway is tRNA modification; N(7)-methylguanine-tRNA biosynthesis. Its function is as follows. Catalyzes the formation of N(7)-methylguanine at position 46 (m7G46) in tRNA. The sequence is that of tRNA (guanine-N(7)-)-methyltransferase from Legionella pneumophila (strain Paris).